The sequence spans 340 residues: Putative transport protein AF_1800 (340 aa).

The next 7 membrane-spanning stretches (helical) occupy residues 7–27 (LVLLLSILVVLALTFYFFTPL), 57–77 (SVIATAIVILPISVLMFYGLI), 140–160 (TLLILNFFISIVVCFYALADM), 193–213 (LWFGNFVVAILIGLVSLPFFL), 225–245 (GLMFLAALIPIFAEWMIILPV), 260–280 (FLLIGVVFLYVLPELILRPYF), and 290–310 (LVLMLAFIGGGLVGGISGFFI).

It belongs to the autoinducer-2 exporter (AI-2E) (TC 2.A.86) family.

The protein resides in the cell membrane. This Archaeoglobus fulgidus (strain ATCC 49558 / DSM 4304 / JCM 9628 / NBRC 100126 / VC-16) protein is Putative transport protein AF_1800.